We begin with the raw amino-acid sequence, 462 residues long: A-type ATP synthase subunit B (462 aa).

It belongs to the ATPase alpha/beta chains family. In terms of assembly, has multiple subunits with at least A(3), B(3), C, D, E, F, H, I and proteolipid K(x).

The protein localises to the cell membrane. Component of the A-type ATP synthase that produces ATP from ADP in the presence of a proton gradient across the membrane. The B chain is a regulatory subunit. The sequence is that of A-type ATP synthase subunit B from Methanococcus maripaludis (strain C5 / ATCC BAA-1333).